Here is a 91-residue protein sequence, read N- to C-terminus: Auxin-responsive protein SAUR20 (91 aa).

It belongs to the ARG7 family.

The protein localises to the cell membrane. Its function is as follows. Functions as a positive effector of cell expansion through modulation of auxin transport. This chain is Auxin-responsive protein SAUR20, found in Arabidopsis thaliana (Mouse-ear cress).